The chain runs to 192 residues: Putative inactive ribonuclease 11 (192 aa).

The signal sequence occupies residues 1-15 (MAVFLLLLALGLLLA). The segment at 21–54 (RMKGTTEQFSQEEMQPAAKQTLEESANSTLSDKN) is disordered. Residues 43–54 (EESANSTLSDKN) are compositionally biased toward polar residues. Asparagine 47 and asparagine 104 each carry an N-linked (GlcNAc...) asparagine glycan.

It belongs to the pancreatic ribonuclease family.

Its subcellular location is the secreted. The protein is Putative inactive ribonuclease 11 (Rnase11) of Mus musculus (Mouse).